Reading from the N-terminus, the 174-residue chain is Granulocyte colony-stimulating factor (174 aa).

2 disulfide bridges follow: Cys-36–Cys-42 and Cys-64–Cys-74. Thr-133 carries O-linked (GalNAc...) threonine glycosylation.

It belongs to the IL-6 superfamily. Monomer. Post-translationally, O-glycosylated.

Its subcellular location is the secreted. Granulocyte/macrophage colony-stimulating factors are cytokines that act in hematopoiesis by controlling the production, differentiation, and function of 2 related white cell populations of the blood, the granulocytes and the monocytes-macrophages. This CSF induces granulocytes. This Ovis aries (Sheep) protein is Granulocyte colony-stimulating factor (CSF3).